The sequence spans 473 residues: Sucrose-6-phosphate hydrolase (473 aa).

Substrate-binding positions include 44-47, glutamine 63, 106-107, 167-168, and glutamate 224; these read LLND, YS, and RD. The active site involves aspartate 47.

Belongs to the glycosyl hydrolase 32 family.

It localises to the cytoplasm. The catalysed reaction is Hydrolysis of terminal non-reducing beta-D-fructofuranoside residues in beta-D-fructofuranosides.. Its pathway is glycan biosynthesis; sucrose metabolism. In Lactococcus lactis subsp. lactis (Streptococcus lactis), this protein is Sucrose-6-phosphate hydrolase (scrB).